Consider the following 415-residue polypeptide: 8-amino-7-oxononanoate synthase (415 aa).

Substrate is bound at residue R21. 117 to 118 (GY) serves as a coordination point for pyridoxal 5'-phosphate. H149 provides a ligand contact to substrate. 3 residues coordinate pyridoxal 5'-phosphate: S195, H223, and T251. N6-(pyridoxal phosphate)lysine is present on K254. A substrate-binding site is contributed by T374.

The protein belongs to the class-II pyridoxal-phosphate-dependent aminotransferase family. BioF subfamily. Homodimer. Pyridoxal 5'-phosphate is required as a cofactor.

It carries out the reaction 6-carboxyhexanoyl-[ACP] + L-alanine + H(+) = (8S)-8-amino-7-oxononanoate + holo-[ACP] + CO2. It functions in the pathway cofactor biosynthesis; biotin biosynthesis. In terms of biological role, catalyzes the decarboxylative condensation of pimeloyl-[acyl-carrier protein] and L-alanine to produce 8-amino-7-oxononanoate (AON), [acyl-carrier protein], and carbon dioxide. This chain is 8-amino-7-oxononanoate synthase, found in Ralstonia pickettii (strain 12J).